Here is a 210-residue protein sequence, read N- to C-terminus: NAD(P)H-hydrate epimerase (210 aa).

Positions 11–210 (AHNFDDYTIN…TVADIGIYEP (200 aa)) constitute a YjeF N-terminal domain. Position 60-64 (60-64 (NNGGD)) interacts with (6S)-NADPHX. 2 residues coordinate K(+): asparagine 61 and aspartate 123. (6S)-NADPHX-binding positions include 127-133 (GVGLSRD) and aspartate 156. K(+) is bound at residue threonine 159.

Belongs to the NnrE/AIBP family. K(+) is required as a cofactor.

The catalysed reaction is (6R)-NADHX = (6S)-NADHX. It catalyses the reaction (6R)-NADPHX = (6S)-NADPHX. Functionally, catalyzes the epimerization of the S- and R-forms of NAD(P)HX, a damaged form of NAD(P)H that is a result of enzymatic or heat-dependent hydration. This is a prerequisite for the S-specific NAD(P)H-hydrate dehydratase to allow the repair of both epimers of NAD(P)HX. The sequence is that of NAD(P)H-hydrate epimerase from Oenococcus oeni (strain ATCC BAA-331 / PSU-1).